Here is a 370-residue protein sequence, read N- to C-terminus: 3-dehydroquinate synthase (370 aa).

NAD(+)-binding positions include 112–116, 136–137, lysine 149, lysine 158, and 176–179; these read GVIGD, TT, and TLAT. Positions 191, 254, and 276 each coordinate Zn(2+).

This sequence belongs to the sugar phosphate cyclases superfamily. Dehydroquinate synthase family. The cofactor is Co(2+). Zn(2+) is required as a cofactor. It depends on NAD(+) as a cofactor.

The protein resides in the cytoplasm. The catalysed reaction is 7-phospho-2-dehydro-3-deoxy-D-arabino-heptonate = 3-dehydroquinate + phosphate. It participates in metabolic intermediate biosynthesis; chorismate biosynthesis; chorismate from D-erythrose 4-phosphate and phosphoenolpyruvate: step 2/7. Catalyzes the conversion of 3-deoxy-D-arabino-heptulosonate 7-phosphate (DAHP) to dehydroquinate (DHQ). This Xylella fastidiosa (strain M12) protein is 3-dehydroquinate synthase.